Reading from the N-terminus, the 790-residue chain is Type VI secretion system spike protein VgrG5 (790 aa).

Basic and acidic residues-rich tracts occupy residues 753–763 (GFRDYRAEMPQ) and 772–790 (AYRR…EPTP). The interval 753 to 790 (GFRDYRAEMPQHKPRSAPDAYRRDASRPGAADKDEPTP) is disordered.

The protein belongs to the VgrG protein family.

It is found in the secreted. Functionally, part of the H2 type VI secretion system (H2-T6SS) specialized secretion system, which delivers several virulence factors in both prokaryotic and eukaryotic cells during infection. Allows the delivery of the phospholipase effector PldB to target cells where it exerts its toxicity. Also plays a role in VgrG4b and its effector PldA secretion. The chain is Type VI secretion system spike protein VgrG5 from Pseudomonas aeruginosa (strain ATCC 15692 / DSM 22644 / CIP 104116 / JCM 14847 / LMG 12228 / 1C / PRS 101 / PAO1).